A 352-amino-acid chain; its full sequence is MDAARRGDTQPVMWTTRWLLLLPLLLCEGAQALECYSCVQKADDGCSPHKMKTVKCGPGVDVCTEAVGAVESIHGQFSVAVRGCGSGIPGKNDRGLDLHGLLAFIQLQQCTEDRCNAKLNLTLRGLNPAGNESAYEHNGAECYSCMGLSREKCQGAMPPVVNCYNASGRVYKGCFDGNVTLTAANVTVSLPVRGCVQDEACTRDGVTGPGFTLSGSCCQGPRCNSDLRNKTYFSPRIPPLVLLPPPTTPAPSTRTQNSSSTTSTTAPTTATTTIKPTTVQASHTSSTHETEHEVIQEEGSHLSGGATGHQDRSNMGKFPEKGGAQIPSKGGSDALGSWLSAILLTVVAGAML.

The signal sequence occupies residues 1-32 (MDAARRGDTQPVMWTTRWLLLLPLLLCEGAQA). A UPAR/Ly6 1 domain is found at 35–128 (CYSCVQKADD…LNLTLRGLNP (94 aa)). N-linked (GlcNAc...) asparagine glycans are attached at residues asparagine 120, asparagine 131, asparagine 178, and asparagine 185. Positions 142-224 (CYSCMGLSRE…GSCCQGPRCN (83 aa)) constitute a UPAR/Ly6 2 domain. The span at 236-249 (RIPPLVLLPPPTTP) shows a compositional bias: pro residues. The tract at residues 236–330 (RIPPLVLLPP…KGGAQIPSKG (95 aa)) is disordered. Positions 250-285 (APSTRTQNSSSTTSTTAPTTATTTIKPTTVQASHTS) are enriched in low complexity. Composition is skewed to basic and acidic residues over residues 286–300 (STHE…EEGS) and 309–320 (HQDRSNMGKFPE). A lipid anchor (GPI-anchor amidated glycine) is attached at glycine 330. The propeptide at 331–352 (GSDALGSWLSAILLTVVAGAML) is removed in mature form.

Interacts with AGR2 and AGR3. Binds laminin-1 and laminin-5. Interacts with LGALS3. As to expression, found predominantly on the basal layers of squamous epithelium. Expressed in the gravid uterus and on epithelial of the upper gastrointestinal tract. It has been found in tumor lines which metastasize via the lymphatic system.

Its subcellular location is the cell membrane. Functionally, supports cell migration. May be involved in tumor progression. In Rattus norvegicus (Rat), this protein is Ly6/PLAUR domain-containing protein 3 (Lypd3).